The following is a 280-amino-acid chain: uncharacterized protein (280 aa).

The protein belongs to the eukaryotic-type primase small subunit family.

This is an uncharacterized protein from Archaeoglobus fulgidus (strain ATCC 49558 / DSM 4304 / JCM 9628 / NBRC 100126 / VC-16).